A 443-amino-acid polypeptide reads, in one-letter code: 3-phosphoshikimate 1-carboxyvinyltransferase (443 aa).

The segment at 1-22 (MSHASRPTPLEARGSTPLTGRV) is disordered. Positions 28, 29, and 33 each coordinate 3-phosphoshikimate. Residue Lys-28 coordinates phosphoenolpyruvate. Phosphoenolpyruvate-binding residues include Gly-101 and Arg-129. 4 residues coordinate 3-phosphoshikimate: Ser-174, Gln-176, Asp-326, and Lys-353. A phosphoenolpyruvate-binding site is contributed by Gln-176. Catalysis depends on Asp-326, which acts as the Proton acceptor. Arg-357 and Arg-400 together coordinate phosphoenolpyruvate.

The protein belongs to the EPSP synthase family. In terms of assembly, monomer.

The protein resides in the cytoplasm. The catalysed reaction is 3-phosphoshikimate + phosphoenolpyruvate = 5-O-(1-carboxyvinyl)-3-phosphoshikimate + phosphate. The protein operates within metabolic intermediate biosynthesis; chorismate biosynthesis; chorismate from D-erythrose 4-phosphate and phosphoenolpyruvate: step 6/7. Functionally, catalyzes the transfer of the enolpyruvyl moiety of phosphoenolpyruvate (PEP) to the 5-hydroxyl of shikimate-3-phosphate (S3P) to produce enolpyruvyl shikimate-3-phosphate and inorganic phosphate. The sequence is that of 3-phosphoshikimate 1-carboxyvinyltransferase from Afipia carboxidovorans (strain ATCC 49405 / DSM 1227 / KCTC 32145 / OM5) (Oligotropha carboxidovorans).